Here is a 569-residue protein sequence, read N- to C-terminus: 2-succinyl-5-enolpyruvyl-6-hydroxy-3-cyclohexene-1-carboxylate synthase (569 aa).

The protein belongs to the TPP enzyme family. MenD subfamily. As to quaternary structure, homodimer. Requires Mg(2+) as cofactor. It depends on Mn(2+) as a cofactor. The cofactor is thiamine diphosphate.

It catalyses the reaction isochorismate + 2-oxoglutarate + H(+) = 5-enolpyruvoyl-6-hydroxy-2-succinyl-cyclohex-3-ene-1-carboxylate + CO2. The protein operates within quinol/quinone metabolism; 1,4-dihydroxy-2-naphthoate biosynthesis; 1,4-dihydroxy-2-naphthoate from chorismate: step 2/7. It participates in quinol/quinone metabolism; menaquinone biosynthesis. Catalyzes the thiamine diphosphate-dependent decarboxylation of 2-oxoglutarate and the subsequent addition of the resulting succinic semialdehyde-thiamine pyrophosphate anion to isochorismate to yield 2-succinyl-5-enolpyruvyl-6-hydroxy-3-cyclohexene-1-carboxylate (SEPHCHC). The chain is 2-succinyl-5-enolpyruvyl-6-hydroxy-3-cyclohexene-1-carboxylate synthase from Paenarthrobacter aurescens (strain TC1).